The primary structure comprises 810 residues: Plasminogen (810 aa).

A signal peptide spans Met1–Gly19. Positions Glu20–Val98 constitute a PAN domain. 12 disulfide bridges follow: Cys49-Cys73, Cys53-Cys61, Cys103-Cys181, Cys124-Cys164, Cys152-Cys176, Cys185-Cys262, Cys188-Cys316, Cys206-Cys245, Cys234-Cys257, Cys275-Cys352, Cys296-Cys335, and Cys324-Cys347. Kringle domains are found at residues Cys103–Cys181, Glu184–Cys262, and Cys275–Cys352. Residues Gln125–Thr141 show a composition bias toward polar residues. Residues Gln125–Glu145 form a disordered region. Residues Thr136, Asp158, and Arg172 each coordinate L-lysine. O-linked (GalNAc...) threonine glycosylation is present at Thr365. Cystine bridges form between Cys377–Cys454, Cys398–Cys437, Cys426–Cys449, Cys481–Cys560, Cys502–Cys543, Cys531–Cys555, Cys567–Cys685, Cys577–Cys585, and Cys607–Cys623. Kringle domains follow at residues Cys377 to Cys454 and Cys481 to Cys560. L-lysine-binding residues include Asp432 and Arg445. A Peptidase S1 domain is found at Val581–Arg808. A Phosphoserine modification is found at Ser597. Catalysis depends on charge relay system residues His622 and Asp665. Ser688 bears the Phosphoserine mark. 3 disulfide bridges follow: Cys699–Cys766, Cys729–Cys745, and Cys756–Cys784. The Charge relay system role is filled by Ser760.

It belongs to the peptidase S1 family. Plasminogen subfamily. As to quaternary structure, interacts with CSPG4 and AMOT. Interacts (via the Kringle domains) with HRG; the interaction tethers PLG to the cell surface and enhances its activation. Interacts (via Kringle 4 domain) with ADA; the interaction stimulates PLG activation when in complex with DPP4. Angiostatin: Interacts with ATP5F1A; the interaction inhibits most of the angiogenic effects of angiostatin. In terms of processing, in the presence of the inhibitor, the activation involves only cleavage after Arg-580, yielding two chains held together by two disulfide bonds. In the absence of the inhibitor, the activation involves additionally the removal of the activation peptide.

The protein localises to the secreted. It catalyses the reaction Preferential cleavage: Lys-|-Xaa &gt; Arg-|-Xaa, higher selectivity than trypsin. Converts fibrin into soluble products.. Converted into plasmin by plasminogen activators, both plasminogen and its activator being bound to fibrin. Activated with catalytic amounts of streptokinase. Functionally, plasmin dissolves the fibrin of blood clots and acts as a proteolytic factor in a variety of other processes including embryonic development, tissue remodeling, tumor invasion, and inflammation. In ovulation, weakens the walls of the Graafian follicle. It activates the urokinase-type plasminogen activator, collagenases and several complement zymogens, such as C1, C4 and C5. Cleavage of fibronectin and laminin leads to cell detachment and apoptosis. Also cleaves fibrin, thrombospondin and von Willebrand factor. Its role in tissue remodeling and tumor invasion may be modulated by CSPG4. Binds to cells. In Macaca mulatta (Rhesus macaque), this protein is Plasminogen (PLG).